Here is a 317-residue protein sequence, read N- to C-terminus: Protoheme IX farnesyltransferase (317 aa).

7 helical membrane passes run 33-53 (VMSL…GEIN), 54-74 (PILG…SGAL), 117-137 (VILG…TIFF), 154-174 (IVIG…CVTG), 181-201 (VILF…LALF), 242-262 (FFTG…SAIF), and 285-305 (MFAY…ADHF).

Belongs to the UbiA prenyltransferase family. Protoheme IX farnesyltransferase subfamily.

It is found in the cell inner membrane. The enzyme catalyses heme b + (2E,6E)-farnesyl diphosphate + H2O = Fe(II)-heme o + diphosphate. Its pathway is porphyrin-containing compound metabolism; heme O biosynthesis; heme O from protoheme: step 1/1. Converts heme B (protoheme IX) to heme O by substitution of the vinyl group on carbon 2 of heme B porphyrin ring with a hydroxyethyl farnesyl side group. The protein is Protoheme IX farnesyltransferase of Agrobacterium fabrum (strain C58 / ATCC 33970) (Agrobacterium tumefaciens (strain C58)).